Reading from the N-terminus, the 376-residue chain is 26S proteasome non-ATPase regulatory subunit 13 (376 aa).

The region spanning 171 to 338 (SYYKDALRFL…KRVHMTWVQP (168 aa)) is the PCI domain.

The protein belongs to the proteasome subunit S11 family. In terms of assembly, component of the 19S proteasome regulatory particle complex. The 26S proteasome consists of a 20S core particle (CP) and two 19S regulatory subunits (RP). The regulatory particle is made of a lid composed of 9 subunits including PSMD13, a base containing 6 ATPases and few additional components.

In terms of biological role, component of the 26S proteasome, a multiprotein complex involved in the ATP-dependent degradation of ubiquitinated proteins. This complex plays a key role in the maintenance of protein homeostasis by removing misfolded or damaged proteins, which could impair cellular functions, and by removing proteins whose functions are no longer required. Therefore, the proteasome participates in numerous cellular processes, including cell cycle progression, apoptosis, or DNA damage repair. The polypeptide is 26S proteasome non-ATPase regulatory subunit 13 (PSMD13) (Bos taurus (Bovine)).